A 247-amino-acid chain; its full sequence is Large ribosomal subunit protein uL30 (247 aa).

At methionine 1 the chain carries N-acetylmethionine. Repeat copies occupy residues 7–17 (KKKVPAVPETL), 18–29 (KKKRRNFAELKI), 30–41 (KRLRKKFAQKML), and 42–53 (RKARRKLIYEKA). The segment at 7–53 (KKKVPAVPETLKKKRRNFAELKIKRLRKKFAQKMLRKARRKLIYEKA) is 4 X 12 AA tandem repeats. Threonine 16 carries the post-translational modification Phosphothreonine. At lysine 123 the chain carries N6-acetyllysine. Residue lysine 126 is modified to N6-succinyllysine. Residue tyrosine 138 is modified to Phosphotyrosine.

It belongs to the universal ribosomal protein uL30 family. In terms of assembly, component of the large ribosomal subunit. Homodimer. Interacts with DHX33.

It localises to the cytoplasm. In terms of biological role, component of the large ribosomal subunit. The ribosome is a large ribonucleoprotein complex responsible for the synthesis of proteins in the cell. Binds to G-rich structures in 28S rRNA and in mRNAs. Plays a regulatory role in the translation apparatus; inhibits cell-free translation of mRNAs. The protein is Large ribosomal subunit protein uL30 (RPL7) of Pongo abelii (Sumatran orangutan).